The following is a 198-amino-acid chain: 5'-deoxynucleotidase hdd1 (198 aa).

The HD domain maps to 38–144 (IADHMYRMGI…VKDIDKFEMI (107 aa)). Residues His41, His69, Asp70, Glu73, Asp78, Ile79, and Asp139 each coordinate a divalent metal cation.

It belongs to the HDDC2 family. As to quaternary structure, homodimer. Mn(2+) serves as cofactor. It depends on Co(2+) as a cofactor. Requires Mg(2+) as cofactor.

The protein localises to the cytoplasm. It localises to the nucleus. It carries out the reaction a 2'-deoxyribonucleoside 5'-phosphate + H2O = a 2'-deoxyribonucleoside + phosphate. Functionally, catalyzes the dephosphorylation of the nucleoside 5'-monophosphates deoxyadenosine monophosphate (dAMP), deoxycytidine monophosphate (dCMP), deoxyguanosine monophosphate (dGMP) and deoxythymidine monophosphate (dTMP). This Schizosaccharomyces pombe (strain 972 / ATCC 24843) (Fission yeast) protein is 5'-deoxynucleotidase hdd1.